The chain runs to 260 residues: Hydroxyacylglutathione hydrolase (260 aa).

7 residues coordinate Zn(2+): His-61, His-63, Asp-65, His-66, His-119, Asp-138, and His-176.

This sequence belongs to the metallo-beta-lactamase superfamily. Glyoxalase II family. Monomer. Zn(2+) is required as a cofactor.

It catalyses the reaction an S-(2-hydroxyacyl)glutathione + H2O = a 2-hydroxy carboxylate + glutathione + H(+). It participates in secondary metabolite metabolism; methylglyoxal degradation; (R)-lactate from methylglyoxal: step 2/2. Functionally, thiolesterase that catalyzes the hydrolysis of S-D-lactoyl-glutathione to form glutathione and D-lactic acid. The polypeptide is Hydroxyacylglutathione hydrolase (Brucella suis (strain ATCC 23445 / NCTC 10510)).